The following is a 435-amino-acid chain: 3-phosphoshikimate 1-carboxyvinyltransferase (435 aa).

3-phosphoshikimate-binding residues include lysine 25, serine 26, and arginine 30. Lysine 25 contacts phosphoenolpyruvate. Phosphoenolpyruvate contacts are provided by glycine 99 and arginine 130. Residues serine 176, serine 177, glutamine 178, serine 204, aspartate 319, asparagine 342, and lysine 346 each contribute to the 3-phosphoshikimate site. Glutamine 178 serves as a coordination point for phosphoenolpyruvate. The Proton acceptor role is filled by aspartate 319. Phosphoenolpyruvate-binding residues include arginine 350, arginine 394, and lysine 419.

Belongs to the EPSP synthase family. In terms of assembly, monomer.

It localises to the cytoplasm. The catalysed reaction is 3-phosphoshikimate + phosphoenolpyruvate = 5-O-(1-carboxyvinyl)-3-phosphoshikimate + phosphate. It functions in the pathway metabolic intermediate biosynthesis; chorismate biosynthesis; chorismate from D-erythrose 4-phosphate and phosphoenolpyruvate: step 6/7. Its function is as follows. Catalyzes the transfer of the enolpyruvyl moiety of phosphoenolpyruvate (PEP) to the 5-hydroxyl of shikimate-3-phosphate (S3P) to produce enolpyruvyl shikimate-3-phosphate and inorganic phosphate. The polypeptide is 3-phosphoshikimate 1-carboxyvinyltransferase (Haemophilus ducreyi (strain 35000HP / ATCC 700724)).